We begin with the raw amino-acid sequence, 519 residues long: MARAGPAWLLLAIWVVLPSWLSSAKVSSLIERISDPKDLKKLLRTRNNVLVLYSKSEVAAENHLRLLSTVAQAVKGQGTICWVDCGDAESRKLCKKMKVDLSPKDKKVELFHYQDGAFHTEYNRAVTFKSIVAFLKDPKGPPLWEEDPGAKDVVHLDSEKDFRRLLKKEEKPLLIMFYAPWCSMCKRMMPHFQKAATQLRGHAVLAGMNVYSSEFENIKEEYSVRGFPTICYFEKGRFLFQYDNYGSTAEDIVEWLKNPQPPQPQVPETPWADEGGSVYHLTDEDFDQFVKEHSSVLVMFHAPWCGHCKKMKPEFEKAAEALHGEADSSGVLAAVDATVNKALAERFHISEFPTLKYFKNGEKYAVPVLRTKKKFLEWMQNPEAPPPPEPTWEEQQTSVLHLVGDNFRETLKKKKHTLVMFYAPWCPHCKKVIPHFTATADAFKDDRKIACAAVDCVKDKNQDLCQQEAVKGYPTFHYYHYGKFAEKYDSDRTELGFTNYIRALREGDHERLGKKKEEL.

Positions 1–21 (MARAGPAWLLLAIWVVLPSWL) are cleaved as a signal peptide. 4 disulfides stabilise this stretch: Cys-85/Cys-94, Cys-182/Cys-185, Cys-305/Cys-308, and Cys-426/Cys-429. Thioredoxin domains are found at residues 134–261 (FLKD…NPQP), 270–384 (PWAD…NPEA), and 378–506 (WMQN…ALRE). The short motif at 516-519 (KEEL) is the Prevents secretion from ER element.

Belongs to the protein disulfide isomerase family. As to quaternary structure, interacts with CALR (via P-domain).

It localises to the endoplasmic reticulum lumen. It carries out the reaction Catalyzes the rearrangement of -S-S- bonds in proteins.. The chain is Protein disulfide-isomerase A5 (PDIA5) from Homo sapiens (Human).